Consider the following 436-residue polypeptide: MSLPTVAIVGRPNVGKSTIFNRIAGERISIVEDIPGVTRDRIYATGEWLTRKFNIIDTGGIELSDEPFMTEIRAQAEIAMTEADVIIAVVDGETGITDADEAVANILYRTDKPVILVVNKVDNPERRMEIFDFYSLGLGDPYPVSAVHGIGTGDVLDAIVQNLPNEIEEENENVIKFSLIGRPNVGKSSLINAILGEDRVIASPIAGTTRDAIDTHFVDSEDQEFVMIDTAGMRKSGKIYENTEKYSVMRAMRAIDRSDIVLMVINAEEGIREYDMRIAGFAHEAGKGILIVVNKWDTLEKDNDTMKNFELEIRTKFKFLDYAPIVYVSAKTGQRLNKLPDMIKEIHHAQNLRISSSVLNDVIMDAVAINPTPTDKGKRLKIFYATQVAIKPPTFVVFVNEEELMHFSYLRFLENQIRKAFVFEGTPVHLIARKRK.

2 consecutive EngA-type G domains span residues P4–I167 and I175–N351. Residues G10 to S17, D57 to I61, N119 to D122, G181 to S188, D229 to M233, and N294 to D297 each bind GTP. Positions L352–K436 constitute a KH-like domain.

It belongs to the TRAFAC class TrmE-Era-EngA-EngB-Septin-like GTPase superfamily. EngA (Der) GTPase family. In terms of assembly, associates with the 50S ribosomal subunit.

GTPase that plays an essential role in the late steps of ribosome biogenesis. This Lactococcus lactis subsp. lactis (strain IL1403) (Streptococcus lactis) protein is GTPase Der.